The primary structure comprises 346 residues: tRNA N6-adenosine threonylcarbamoyltransferase (346 aa).

Fe cation-binding residues include histidine 110 and histidine 114. Residues 132-136 (LLSGG), aspartate 165, glycine 178, and asparagine 274 each bind substrate. A Fe cation-binding site is contributed by aspartate 298.

It belongs to the KAE1 / TsaD family. Fe(2+) serves as cofactor.

The protein localises to the cytoplasm. The enzyme catalyses L-threonylcarbamoyladenylate + adenosine(37) in tRNA = N(6)-L-threonylcarbamoyladenosine(37) in tRNA + AMP + H(+). Functionally, required for the formation of a threonylcarbamoyl group on adenosine at position 37 (t(6)A37) in tRNAs that read codons beginning with adenine. Is involved in the transfer of the threonylcarbamoyl moiety of threonylcarbamoyl-AMP (TC-AMP) to the N6 group of A37, together with TsaE and TsaB. TsaD likely plays a direct catalytic role in this reaction. This is tRNA N6-adenosine threonylcarbamoyltransferase from Borreliella afzelii (strain PKo) (Borrelia afzelii).